The chain runs to 239 residues: Purine nucleoside phosphorylase DeoD-type (239 aa).

Residue His5 coordinates a purine D-ribonucleoside. Residues Gly21, Arg25, Arg44, and 89–92 (RVGS) each bind phosphate. Residues 180 to 182 (EME) and 204 to 205 (SD) contribute to the a purine D-ribonucleoside site. Asp205 acts as the Proton donor in catalysis.

The protein belongs to the PNP/UDP phosphorylase family. As to quaternary structure, homohexamer; trimer of homodimers.

It carries out the reaction a purine D-ribonucleoside + phosphate = a purine nucleobase + alpha-D-ribose 1-phosphate. The enzyme catalyses a purine 2'-deoxy-D-ribonucleoside + phosphate = a purine nucleobase + 2-deoxy-alpha-D-ribose 1-phosphate. In terms of biological role, catalyzes the reversible phosphorolytic breakdown of the N-glycosidic bond in the beta-(deoxy)ribonucleoside molecules, with the formation of the corresponding free purine bases and pentose-1-phosphate. This is Purine nucleoside phosphorylase DeoD-type from Klebsiella pneumoniae.